The sequence spans 84 residues: ATP synthase subunit c (84 aa).

2 helical membrane-spanning segments follow: residues 9–29 (IFGS…GFSL) and 54–74 (IVAG…LLFI).

This sequence belongs to the ATPase C chain family. In terms of assembly, F-type ATPases have 2 components, F(1) - the catalytic core - and F(0) - the membrane proton channel. F(1) has five subunits: alpha(3), beta(3), gamma(1), delta(1), epsilon(1). F(0) has three main subunits: a(1), b(2) and c(10-14). The alpha and beta chains form an alternating ring which encloses part of the gamma chain. F(1) is attached to F(0) by a central stalk formed by the gamma and epsilon chains, while a peripheral stalk is formed by the delta and b chains.

It is found in the cell inner membrane. In terms of biological role, f(1)F(0) ATP synthase produces ATP from ADP in the presence of a proton or sodium gradient. F-type ATPases consist of two structural domains, F(1) containing the extramembraneous catalytic core and F(0) containing the membrane proton channel, linked together by a central stalk and a peripheral stalk. During catalysis, ATP synthesis in the catalytic domain of F(1) is coupled via a rotary mechanism of the central stalk subunits to proton translocation. Functionally, key component of the F(0) channel; it plays a direct role in translocation across the membrane. A homomeric c-ring of between 10-14 subunits forms the central stalk rotor element with the F(1) delta and epsilon subunits. This chain is ATP synthase subunit c, found in Histophilus somni (strain 129Pt) (Haemophilus somnus).